The sequence spans 61 residues: Small ribosomal subunit protein bS21 (61 aa).

It belongs to the bacterial ribosomal protein bS21 family.

The polypeptide is Small ribosomal subunit protein bS21 (Methylacidiphilum infernorum (isolate V4) (Methylokorus infernorum (strain V4))).